We begin with the raw amino-acid sequence, 102 residues long: MNSQNIRIRLKAFDHRILDTSTREIVSTAKRTGANVRGPIPLPTRIEKFTVNRGPHIDKKSREQFEMRTHKRLLDIVDPTPQTVDALMKLDLSAGVDVEIKL.

The protein belongs to the universal ribosomal protein uS10 family. In terms of assembly, part of the 30S ribosomal subunit.

In terms of biological role, involved in the binding of tRNA to the ribosomes. The polypeptide is Small ribosomal subunit protein uS10 (Bartonella tribocorum (strain CIP 105476 / IBS 506)).